The chain runs to 150 residues: Large ribosomal subunit protein bL9 (150 aa).

The protein belongs to the bacterial ribosomal protein bL9 family.

Binds to the 23S rRNA. The protein is Large ribosomal subunit protein bL9 of Shewanella baltica (strain OS223).